A 423-amino-acid polypeptide reads, in one-letter code: Amino sugar nitrososynthase RubN8 (423 aa).

It belongs to the acyl-CoA dehydrogenase family. Requires FAD as cofactor.

Its pathway is antibiotic biosynthesis. Its function is as follows. Nitrososynthase involved in the biosynthesis of rubradirin, an ansamycin antibiotic. In vitro, catalyzes the double-oxidation of TDP-L-epi-vancosamine to TDP-L-epi-vancosonitrose. In vivo, probably catalyzes the formation of D-rubranitrose, the nitro sugar moiety of rubradirin. This chain is Amino sugar nitrososynthase RubN8, found in Streptomyces rubradiris (Streptomyces achromogenes subsp. rubradiris).